A 265-amino-acid chain; its full sequence is MQNPSAENSQPPLTEEQVIENLRQTEDFSDQYYAAWWLGRMRSRHPESLPLLLAALAPLHDNPIHDERRAVALNAIRALGILQARSAEEDLRSLLKNNDYSVREESARSLGMIQAKAAVQDLCELLSGAPDELEQAQSGSAKLKEPYESVLEALGSIGVASSSVITIIKPFTKHSRPLIRASALRALLLLTGEQAWAPPLIELLQHDDPLIRRGALLDLGATGWMPALPAIKAATVENSLKLVALRGLAEKSDDTTVLDAMDALL.

This sequence belongs to the CpcE/RpcE/PecE family.

Functionally, an enzyme involved in the biosynthesis of bilin. Might be involved in the specific attachment of phycoerythrobilin (PEB) to the R-phycocyanin II beta chain. In Synechococcus sp. (strain WH8020), this protein is Bilin biosynthesis protein RpcE (rpcE).